A 99-amino-acid polypeptide reads, in one-letter code: Nucleoid-associated protein SPy_1862/M5005_Spy1580 (99 aa).

Belongs to the YbaB/EbfC family. Homodimer.

It is found in the cytoplasm. It localises to the nucleoid. Functionally, binds to DNA and alters its conformation. May be involved in regulation of gene expression, nucleoid organization and DNA protection. The polypeptide is Nucleoid-associated protein SPy_1862/M5005_Spy1580 (Streptococcus pyogenes serotype M1).